The sequence spans 311 residues: Aspartate carbamoyltransferase catalytic subunit (311 aa).

Residues R59 and T60 each coordinate carbamoyl phosphate. Residue K87 coordinates L-aspartate. Residues R109, H139, and Q142 each coordinate carbamoyl phosphate. Residues R172 and R224 each coordinate L-aspartate. 2 residues coordinate carbamoyl phosphate: A265 and P266.

Belongs to the aspartate/ornithine carbamoyltransferase superfamily. ATCase family. In terms of assembly, heterododecamer (2C3:3R2) of six catalytic PyrB chains organized as two trimers (C3), and six regulatory PyrI chains organized as three dimers (R2).

It carries out the reaction carbamoyl phosphate + L-aspartate = N-carbamoyl-L-aspartate + phosphate + H(+). The protein operates within pyrimidine metabolism; UMP biosynthesis via de novo pathway; (S)-dihydroorotate from bicarbonate: step 2/3. Functionally, catalyzes the condensation of carbamoyl phosphate and aspartate to form carbamoyl aspartate and inorganic phosphate, the committed step in the de novo pyrimidine nucleotide biosynthesis pathway. This chain is Aspartate carbamoyltransferase catalytic subunit, found in Streptococcus pyogenes serotype M4 (strain MGAS10750).